We begin with the raw amino-acid sequence, 957 residues long: Protein translocase subunit SecA (957 aa).

ATP-binding positions include Gln86, Gly104–Thr108, and Asp494. Residues Ser929–Ser947 show a composition bias toward low complexity. The tract at residues Ser929 to Glu957 is disordered.

The protein belongs to the SecA family. Monomer and homodimer. Part of the essential Sec protein translocation apparatus which comprises SecA, SecYEG and auxiliary proteins SecDF. Other proteins may also be involved.

The protein localises to the cell inner membrane. It is found in the cellular thylakoid membrane. Its subcellular location is the cytoplasm. It catalyses the reaction ATP + H2O + cellular proteinSide 1 = ADP + phosphate + cellular proteinSide 2.. Its function is as follows. Part of the Sec protein translocase complex. Interacts with the SecYEG preprotein conducting channel. Has a central role in coupling the hydrolysis of ATP to the transfer of proteins into and across the cell membrane, serving as an ATP-driven molecular motor driving the stepwise translocation of polypeptide chains across the membrane. Functionally, probably participates in protein translocation into and across both the cytoplasmic and thylakoid membranes in cyanobacterial cells. This is Protein translocase subunit SecA from Synechococcus sp. (strain JA-2-3B'a(2-13)) (Cyanobacteria bacterium Yellowstone B-Prime).